Here is a 343-residue protein sequence, read N- to C-terminus: Phosphate acyltransferase (343 aa).

The protein belongs to the PlsX family. In terms of assembly, homodimer. Probably interacts with PlsY.

Its subcellular location is the cytoplasm. It catalyses the reaction a fatty acyl-[ACP] + phosphate = an acyl phosphate + holo-[ACP]. The protein operates within lipid metabolism; phospholipid metabolism. Catalyzes the reversible formation of acyl-phosphate (acyl-PO(4)) from acyl-[acyl-carrier-protein] (acyl-ACP). This enzyme utilizes acyl-ACP as fatty acyl donor, but not acyl-CoA. The sequence is that of Phosphate acyltransferase from Haemophilus ducreyi (strain 35000HP / ATCC 700724).